Reading from the N-terminus, the 428-residue chain is Serine--tRNA ligase (428 aa).

235 to 237 (TAE) serves as a coordination point for L-serine. Position 266-268 (266-268 (RSE)) interacts with ATP. E289 lines the L-serine pocket. An ATP-binding site is contributed by 353-356 (EISS). S389 contacts L-serine.

Belongs to the class-II aminoacyl-tRNA synthetase family. Type-1 seryl-tRNA synthetase subfamily. In terms of assembly, homodimer. The tRNA molecule binds across the dimer.

Its subcellular location is the cytoplasm. The enzyme catalyses tRNA(Ser) + L-serine + ATP = L-seryl-tRNA(Ser) + AMP + diphosphate + H(+). The catalysed reaction is tRNA(Sec) + L-serine + ATP = L-seryl-tRNA(Sec) + AMP + diphosphate + H(+). Its pathway is aminoacyl-tRNA biosynthesis; selenocysteinyl-tRNA(Sec) biosynthesis; L-seryl-tRNA(Sec) from L-serine and tRNA(Sec): step 1/1. In terms of biological role, catalyzes the attachment of serine to tRNA(Ser). Is also able to aminoacylate tRNA(Sec) with serine, to form the misacylated tRNA L-seryl-tRNA(Sec), which will be further converted into selenocysteinyl-tRNA(Sec). This is Serine--tRNA ligase from Shewanella woodyi (strain ATCC 51908 / MS32).